A 667-amino-acid chain; its full sequence is Cylicin-1 (667 aa).

Disordered stretches follow at residues 121-251 and 275-634; these read PYTH…SSNV and SQNN…ILPS. Positions 129 to 172 are enriched in basic and acidic residues; sequence KKAESKKYKDDKKETALKKISKKDTGPHEVDEKPKRRNKADKTP. The segment covering 173 to 182 has biased composition (low complexity); that stretch reads SKSSHGSQLS. A compositionally biased stretch (basic and acidic residues) spans 187–197; that stretch reads SKSETNPESKD. Residues 223-237 show a composition bias toward low complexity; that stretch reads STSTKKYSKSSKNNS. A compositionally biased stretch (polar residues) spans 238–251; it reads DAVSETCSKNSSNV. Composition is skewed to basic and acidic residues over residues 284-326, 345-371, 380-394, 417-431, 438-464, 483-506, 521-533, 549-558, and 583-593; these read KKDA…KDTE, SKKD…DAKK, SKKD…KDAE, GDSK…KDAV, SKKD…KEST, SKKD…KKAT, KKTEMFKSSD, and DSKKDAVEPKR. 9 repeat units span residues 287–305, 306–337, 338–368, 369–405, 406–442, 443–475, 476–516, 517–547, and 548–569. The 9 X approximate tandem repeats stretch occupies residues 287-569; that stretch reads AKKDAKGKGS…ESEESLFKPG (283 aa). A compositionally biased stretch (pro residues) spans 624–633; the sequence is PLPPCEPILP.

As to quaternary structure, interacts with proteins of spermatozoa head including ACTL7A, CCIN, FAM209A and SPACA1; the interactions may be necessary for proper acrosome attachment to the nuclear envelope. In terms of tissue distribution, testis.

The protein localises to the cytoplasm. It localises to the cytoskeleton. It is found in the perinuclear theca. Its subcellular location is the calyx. Functionally, plays a role in the establishment of normal sperm morphology during spermatogenesis and is required for acrosome attachment to the nuclear envelope. This chain is Cylicin-1 (CYLC1), found in Bos taurus (Bovine).